The chain runs to 309 residues: 4-hydroxy-3-methylbut-2-enyl diphosphate reductase (309 aa).

Residue Cys-12 coordinates [4Fe-4S] cluster. (2E)-4-hydroxy-3-methylbut-2-enyl diphosphate-binding residues include His-41 and His-74. Dimethylallyl diphosphate is bound by residues His-41 and His-74. The isopentenyl diphosphate site is built by His-41 and His-74. Residue Cys-96 coordinates [4Fe-4S] cluster. His-124 is a (2E)-4-hydroxy-3-methylbut-2-enyl diphosphate binding site. His-124 is a dimethylallyl diphosphate binding site. His-124 is a binding site for isopentenyl diphosphate. The Proton donor role is filled by Glu-126. Thr-167 contributes to the (2E)-4-hydroxy-3-methylbut-2-enyl diphosphate binding site. Cys-197 provides a ligand contact to [4Fe-4S] cluster. Ser-225, Ser-226, Asn-227, and Ser-269 together coordinate (2E)-4-hydroxy-3-methylbut-2-enyl diphosphate. Residues Ser-225, Ser-226, Asn-227, and Ser-269 each contribute to the dimethylallyl diphosphate site. Ser-225, Ser-226, Asn-227, and Ser-269 together coordinate isopentenyl diphosphate.

This sequence belongs to the IspH family. [4Fe-4S] cluster serves as cofactor.

It catalyses the reaction isopentenyl diphosphate + 2 oxidized [2Fe-2S]-[ferredoxin] + H2O = (2E)-4-hydroxy-3-methylbut-2-enyl diphosphate + 2 reduced [2Fe-2S]-[ferredoxin] + 2 H(+). It carries out the reaction dimethylallyl diphosphate + 2 oxidized [2Fe-2S]-[ferredoxin] + H2O = (2E)-4-hydroxy-3-methylbut-2-enyl diphosphate + 2 reduced [2Fe-2S]-[ferredoxin] + 2 H(+). It participates in isoprenoid biosynthesis; dimethylallyl diphosphate biosynthesis; dimethylallyl diphosphate from (2E)-4-hydroxy-3-methylbutenyl diphosphate: step 1/1. It functions in the pathway isoprenoid biosynthesis; isopentenyl diphosphate biosynthesis via DXP pathway; isopentenyl diphosphate from 1-deoxy-D-xylulose 5-phosphate: step 6/6. Its function is as follows. Catalyzes the conversion of 1-hydroxy-2-methyl-2-(E)-butenyl 4-diphosphate (HMBPP) into a mixture of isopentenyl diphosphate (IPP) and dimethylallyl diphosphate (DMAPP). Acts in the terminal step of the DOXP/MEP pathway for isoprenoid precursor biosynthesis. The protein is 4-hydroxy-3-methylbut-2-enyl diphosphate reductase of Shewanella pealeana (strain ATCC 700345 / ANG-SQ1).